The chain runs to 722 residues: Metal transporter cnnm-5 (722 aa).

The signal sequence occupies residues 1–17 (MSLFLFAIFQLALGSPG). The Extracellular segment spans residues 18-139 (APNGPNVPLQ…AAAAKYMGDE (122 aa)). Residues asparagine 102 and asparagine 114 are each glycosylated (N-linked (GlcNAc...) asparagine). The 187-residue stretch at 132–318 (AAKYMGDEIV…AQNEREKTIL (187 aa)) folds into the CNNM transmembrane domain. Residues 140-160 (IVFCFFCILMSAYASGMTLGY) form a helical membrane-spanning segment. Residues 161-196 (MKFSMIDLNTMLKIAEGDAAKKRVRRIMHFRRRSTQ) lie on the Cytoplasmic side of the membrane. Residues 197–217 (LVVTFSLFSSVFTVLFTTTCE) form a helical membrane-spanning segment. Over 218–227 (KMLHGVSNED) the chain is Extracellular. The helical transmembrane segment at 228–248 (VLKMAVPALICLIFAEMIPQA) threads the bilayer. At 249–257 (VCNSKFGFN) the chain is on the cytoplasmic side. A helical transmembrane segment spans residues 258 to 278 (LAASLWFVTVIIFFVTLPIAY). At 279-722 (PASLVLGRFL…ETTPFMEKQE (444 aa)) the chain is on the extracellular side. 3 N-linked (GlcNAc...) asparagine glycosylation sites follow: asparagine 320, asparagine 349, and asparagine 371. CBS domains are found at residues 333–396 (MVPI…LIDE) and 413–473 (TVKF…KIDE). The tract at residues 584–607 (SQRSSSTVNSQQHRQQTTDNSRST) is disordered. The N-linked (GlcNAc...) asparagine glycan is linked to asparagine 639. Residues 686-722 (LNSRASTSTSTTPACRTPLSVDARSQDETTPFMEKQE) form a disordered region. The span at 688–703 (SRASTSTSTTPACRTP) shows a compositional bias: low complexity.

It belongs to the ACDP family.

It is found in the cell membrane. Functionally, probable metal transporter. Probably acts redundantly with the other metal transport proteins cnnm-1, cnnm-2, cnnm-3 and cnnm-4 to regulate Mg(2+) homeostasis. The chain is Metal transporter cnnm-5 from Caenorhabditis elegans.